The following is a 143-amino-acid chain: UPF0292 protein Mbar_A0484 (143 aa).

The region spanning 28 to 109 is the Toprim domain; sequence GAIIIVEGKR…KPELEIRNKL (82 aa). The Mg(2+) site is built by Glu-34, Asp-78, and Asp-80.

The protein belongs to the UPF0292 family. Mg(2+) is required as a cofactor.

In Methanosarcina barkeri (strain Fusaro / DSM 804), this protein is UPF0292 protein Mbar_A0484.